The primary structure comprises 100 residues: Large ribosomal subunit protein eL36B (100 aa).

It belongs to the eukaryotic ribosomal protein eL36 family. Component of the large ribosomal subunit (LSU). Mature yeast ribosomes consist of a small (40S) and a large (60S) subunit. The 40S small subunit contains 1 molecule of ribosomal RNA (18S rRNA) and 33 different proteins (encoded by 57 genes). The large 60S subunit contains 3 rRNA molecules (25S, 5.8S and 5S rRNA) and 46 different proteins (encoded by 81 genes).

Its subcellular location is the cytoplasm. Functionally, component of the ribosome, a large ribonucleoprotein complex responsible for the synthesis of proteins in the cell. The small ribosomal subunit (SSU) binds messenger RNAs (mRNAs) and translates the encoded message by selecting cognate aminoacyl-transfer RNA (tRNA) molecules. The large subunit (LSU) contains the ribosomal catalytic site termed the peptidyl transferase center (PTC), which catalyzes the formation of peptide bonds, thereby polymerizing the amino acids delivered by tRNAs into a polypeptide chain. The nascent polypeptides leave the ribosome through a tunnel in the LSU and interact with protein factors that function in enzymatic processing, targeting, and the membrane insertion of nascent chains at the exit of the ribosomal tunnel. This Saccharomyces cerevisiae (strain ATCC 204508 / S288c) (Baker's yeast) protein is Large ribosomal subunit protein eL36B.